The primary structure comprises 533 residues: Acid-sensing ion channel 3 (533 aa).

The Cytoplasmic segment spans residues 1–19 (MKPRSGLEEAQRRQASDIR). A helical membrane pass occupies residues 20–40 (VFASSCTMHGLGHIFGPGGLT). Thr-40 is modified (phosphothreonine; by PKC). Residues 41–435 (LRRGLWATAV…EQKAAYEVSE (395 aa)) are Extracellular-facing. 7 disulfides stabilise this stretch: Cys-93–Cys-187, Cys-165–Cys-172, Cys-283–Cys-372, Cys-317–Cys-368, Cys-321–Cys-366, Cys-330–Cys-352, and Cys-332–Cys-344. N-linked (GlcNAc...) asparagine glycosylation is present at Asn-176. The disordered stretch occupies residues 286–310 (ASLDPDDFDPEPSDPLGSPRPRPSP). N-linked (GlcNAc...) asparagine glycosylation occurs at Asn-400. The helical transmembrane segment at 436 to 456 (LLGDIGGQMGLFIGASLLTIL) threads the bilayer. Positions 449 to 451 (GAS) match the GAS motif; ion selectivity filter motif. Residues 457–533 (EILDYLCEVF…HRTCYLVTRL (77 aa)) lie on the Cytoplasmic side of the membrane. Residue Ser-523 is modified to Phosphoserine; by PKC. The PDZ-binding motif lies at 530–533 (VTRL).

The protein belongs to the amiloride-sensitive sodium channel (TC 1.A.6) family. ASIC3 subfamily. In terms of assembly, can form homotrimeric channels. Heterotrimer; forms functional heterotrimers producing channel with different properties. Forms heterotrimers with ASIC2; gives rise to a biphasic current with a sustained current which discriminates poorly between Na(+) and K(+). Interacts with STOM; inhibits ASIC3 acid-evoked current. Interacts with LIN7B (via PDZ domain); increases ASIC3 expression at the plasma membrane. Interacts with MAGI1 (via PDZ domain); probably regulates ASIC3. Interacts with GOPC (via PDZ domain); probably regulates ASIC3. Interacts with DLG4 (via PDZ domain); reduces ASIC3 expression at the plasma membrane. Post-translationally, could be phosphorylated by PKC, promoting activation of ASIC2/ASIC3 heterotrimers. In terms of tissue distribution, expressed in sciatic nerve and dorsal root ganglion (at protein level). Expressed in sensory neurons of dorsal root ganglion. Expressed in Golgi interneurons in the granular layer. Also found in superior cervical ganglia, spinal cord and brain stem.

Its subcellular location is the cell membrane. The protein resides in the cytoplasm. The enzyme catalyses Na(+)(in) = Na(+)(out). The catalysed reaction is K(+)(in) = K(+)(out). It catalyses the reaction Ca(2+)(in) = Ca(2+)(out). Its activity is regulated as follows. Inhibited by the diuretic drug amiloride. Inhibited by gadolinium ions. Inhibited by extracellular Ca(2+). Activated by lactate. Salicylic acid, diclofenac and aspirin inhibit the sustained current component. Activated by the vertebrate neuropeptides NPFF and NPSF, and the related FMRFamide. Specifically and reversibly inhibited by the a sea anemone toxin APETx2. ASIC3-containing channels are potentiated by the cono-RFamide CNF-Tx1.1, and probably CNF-Tx1.2 and CNF-Tx1.3 (AC P0DL71). Forms pH-gated heterotrimeric sodium channels that act as postsynaptic excitatory receptors in the nervous system. Upon extracellular acidification, these channels generate a biphasic current with a fast inactivating and a slow sustained phase. ASIC3 is more sensitive to protons and gates between closed, open, and desensitized states faster than other ASICs. Displays high selectivity for sodium ions but can also permit the permeation of other cations. As a neuronal acid sensor, probably contributes to mechanoreception, acid nociception, and heat nociception. By forming heterotrimeric channels with ASIC2, generates a biphasic current with a fast inactivating and a slow sustained phase, which in sensory neurons is proposed to mediate the pain induced by acidosis that occurs in ischemic, damaged or inflamed tissues. The chain is Acid-sensing ion channel 3 from Rattus norvegicus (Rat).